The chain runs to 93 residues: Long neurotoxin 2 (93 aa).

The signal sequence occupies residues M1 to T21. Disulfide bonds link C24/C42, C35/C63, C48/C52, C67/C78, and C79/C84.

This sequence belongs to the three-finger toxin family. Long-chain subfamily. Type II alpha-neurotoxin sub-subfamily. In terms of tissue distribution, expressed by the venom gland.

Its subcellular location is the secreted. Binds with high affinity to muscular (alpha-1/CHRNA1) and neuronal (alpha-7/CHRNA7) nicotinic acetylcholine receptor (nAChR) and inhibits acetylcholine from binding to the receptor, thereby impairing neuromuscular and neuronal transmission. The chain is Long neurotoxin 2 from Hydrophis hardwickii (Hardwick's spine-bellied seasnake).